The following is a 233-amino-acid chain: Large ribosomal subunit protein uL1 (233 aa).

The protein belongs to the universal ribosomal protein uL1 family. Part of the 50S ribosomal subunit.

Binds directly to 23S rRNA. The L1 stalk is quite mobile in the ribosome, and is involved in E site tRNA release. Its function is as follows. Protein L1 is also a translational repressor protein, it controls the translation of the L11 operon by binding to its mRNA. This is Large ribosomal subunit protein uL1 from Psychrobacter sp. (strain PRwf-1).